A 134-amino-acid chain; its full sequence is Arsenate reductase 1 (134 aa).

Active-site nucleophile residues include Cys11, Cys83, and Cys90. 2 disulfide bridges follow: Cys11-Cys83 and Cys83-Cys90.

This sequence belongs to the low molecular weight phosphotyrosine protein phosphatase family. Thioredoxin-coupled ArsC subfamily.

The protein resides in the cytoplasm. The enzyme catalyses arsenate + [thioredoxin]-dithiol + H(+) = arsenite + [thioredoxin]-disulfide + H2O. Functionally, catalyzes the reduction of arsenate [As(V)] to arsenite [As(III)]. This Bacillus cereus (strain ATCC 10987 / NRS 248) protein is Arsenate reductase 1.